The sequence spans 156 residues: Small ribosomal subunit protein uS7 (156 aa).

Belongs to the universal ribosomal protein uS7 family. As to quaternary structure, part of the 30S ribosomal subunit. Contacts proteins S9 and S11.

Its function is as follows. One of the primary rRNA binding proteins, it binds directly to 16S rRNA where it nucleates assembly of the head domain of the 30S subunit. Is located at the subunit interface close to the decoding center, probably blocks exit of the E-site tRNA. In Acaryochloris marina (strain MBIC 11017), this protein is Small ribosomal subunit protein uS7.